A 229-amino-acid polypeptide reads, in one-letter code: Ribonuclease 3 (229 aa).

The RNase III domain maps to 5-127 (LARLERKLGY…LIGAIYLDAD (123 aa)). Glu-40 contributes to the Mg(2+) binding site. The active site involves Asp-44. Mg(2+) is bound by residues Asp-113 and Glu-116. Glu-116 is an active-site residue. Residues 154 to 224 (DPKTRLQEFL…AASALIALGV (71 aa)) enclose the DRBM domain.

It belongs to the ribonuclease III family. As to quaternary structure, homodimer. The cofactor is Mg(2+).

Its subcellular location is the cytoplasm. The catalysed reaction is Endonucleolytic cleavage to 5'-phosphomonoester.. Functionally, digests double-stranded RNA. Involved in the processing of primary rRNA transcript to yield the immediate precursors to the large and small rRNAs (23S and 16S). Processes some mRNAs, and tRNAs when they are encoded in the rRNA operon. Processes pre-crRNA and tracrRNA of type II CRISPR loci if present in the organism. This is Ribonuclease 3 from Pseudomonas putida (strain GB-1).